A 226-amino-acid chain; its full sequence is Ribonuclease 3 (226 aa).

The 123-residue stretch at 6–128 (IQKLQKILGY…LIGSIFLDSN (123 aa)) folds into the RNase III domain. E41 contributes to the Mg(2+) binding site. The active site involves D45. N114 and E117 together coordinate Mg(2+). E117 is a catalytic residue. The DRBM domain occupies 155 to 225 (DPKTRLQEYL…AQNALIKLGI (71 aa)).

It belongs to the ribonuclease III family. In terms of assembly, homodimer. Mg(2+) is required as a cofactor.

It localises to the cytoplasm. It carries out the reaction Endonucleolytic cleavage to 5'-phosphomonoester.. In terms of biological role, digests double-stranded RNA. Involved in the processing of primary rRNA transcript to yield the immediate precursors to the large and small rRNAs (23S and 16S). Processes some mRNAs, and tRNAs when they are encoded in the rRNA operon. Processes pre-crRNA and tracrRNA of type II CRISPR loci if present in the organism. The chain is Ribonuclease 3 from Buchnera aphidicola subsp. Baizongia pistaciae (strain Bp).